We begin with the raw amino-acid sequence, 137 residues long: Large ribosomal subunit protein uL16 (137 aa).

This sequence belongs to the universal ribosomal protein uL16 family. In terms of assembly, part of the 50S ribosomal subunit.

Binds 23S rRNA and is also seen to make contacts with the A and possibly P site tRNAs. The sequence is that of Large ribosomal subunit protein uL16 from Methylobacterium sp. (strain 4-46).